Reading from the N-terminus, the 320-residue chain is Beta-sarcoglycan (320 aa).

The span at 1–10 shows a compositional bias: low complexity; sequence MAAAAAAAAA. The segment at 1–34 is disordered; the sequence is MAAAAAAAAATEQQGSNGPVKKSMREKAVERRNV. The Cytoplasmic portion of the chain corresponds to 1–67; that stretch reads MAAAAAAAAA…GLRGRKGNLA (67 aa). Residues 23-34 are compositionally biased toward basic and acidic residues; sequence SMREKAVERRNV. Residues 68–88 form a helical; Signal-anchor for type II membrane protein membrane-spanning segment; it reads ICVIVLLFILAVINLLITLVI. At 89–320 the chain is on the extracellular side; it reads WAVIRIGPNG…VSDNPCGNTH (232 aa). Residues Asn-160, Asn-213, and Asn-260 are each glycosylated (N-linked (GlcNAc...) asparagine). 2 cysteine pairs are disulfide-bonded: Cys-290–Cys-316 and Cys-292–Cys-309.

This sequence belongs to the sarcoglycan beta/delta/gamma/zeta family. Cross-link to form 2 major subcomplexes: one consisting of SGCB, SGCD and SGCG and the other consisting of SGCB and SGCD. The association between SGCB and SGCG is particularly strong while SGCA is loosely associated with the other sarcoglycans. In terms of processing, disulfide bonds are present. In terms of tissue distribution, most strongly expressed in skeletal and heart muscle. Also detected in proliferating myoblasts.

It is found in the cell membrane. Its subcellular location is the sarcolemma. The protein localises to the cytoplasm. It localises to the cytoskeleton. Functionally, component of the sarcoglycan complex, a subcomplex of the dystrophin-glycoprotein complex which forms a link between the F-actin cytoskeleton and the extracellular matrix. In Mus musculus (Mouse), this protein is Beta-sarcoglycan (Sgcb).